Reading from the N-terminus, the 479-residue chain is GTPase Obg (479 aa).

The 158-residue stretch at 2–159 (TTFVDRVELH…QDIVLELKTV (158 aa)) folds into the Obg domain. The segment at 61 to 87 (HHKPHRSATNGKPGEGGNRSGKDGQDL) is disordered. The region spanning 160–331 (ADVALVGYPS…LSFALAELVG (172 aa)) is the OBG-type G domain. Residues 166-173 (GYPSAGKS), 191-195 (FTTLV), 212-215 (DVPG), 283-286 (NKID), and 312-314 (SAV) contribute to the GTP site. Residues serine 173 and threonine 193 each contribute to the Mg(2+) site. The 83-residue stretch at 349–431 (PKAVDDAGFT…DNAVVFDWEP (83 aa)) folds into the OCT domain. Residues 440 to 453 (LGRRGEDHRLDEPR) are compositionally biased toward basic and acidic residues. The tract at residues 440–479 (LGRRGEDHRLDEPRPAAQRRRDKQAERDDAEKEYDDFEPF) is disordered. Positions 470 to 479 (EKEYDDFEPF) are enriched in acidic residues.

The protein belongs to the TRAFAC class OBG-HflX-like GTPase superfamily. OBG GTPase family. As to quaternary structure, monomer. Mg(2+) serves as cofactor.

The protein localises to the cytoplasm. Its function is as follows. An essential GTPase which binds GTP, GDP and possibly (p)ppGpp with moderate affinity, with high nucleotide exchange rates and a fairly low GTP hydrolysis rate. Plays a role in control of the cell cycle, stress response, ribosome biogenesis and in those bacteria that undergo differentiation, in morphogenesis control. The chain is GTPase Obg from Streptomyces avermitilis (strain ATCC 31267 / DSM 46492 / JCM 5070 / NBRC 14893 / NCIMB 12804 / NRRL 8165 / MA-4680).